The sequence spans 262 residues: Acyl-[acyl-carrier-protein]--UDP-N-acetylglucosamine O-acyltransferase (262 aa).

The protein belongs to the transferase hexapeptide repeat family. LpxA subfamily. Homotrimer.

The protein resides in the cytoplasm. The catalysed reaction is a (3R)-hydroxyacyl-[ACP] + UDP-N-acetyl-alpha-D-glucosamine = a UDP-3-O-[(3R)-3-hydroxyacyl]-N-acetyl-alpha-D-glucosamine + holo-[ACP]. It functions in the pathway glycolipid biosynthesis; lipid IV(A) biosynthesis; lipid IV(A) from (3R)-3-hydroxytetradecanoyl-[acyl-carrier-protein] and UDP-N-acetyl-alpha-D-glucosamine: step 1/6. Its function is as follows. Involved in the biosynthesis of lipid A, a phosphorylated glycolipid that anchors the lipopolysaccharide to the outer membrane of the cell. The polypeptide is Acyl-[acyl-carrier-protein]--UDP-N-acetylglucosamine O-acyltransferase (Mannheimia succiniciproducens (strain KCTC 0769BP / MBEL55E)).